Reading from the N-terminus, the 303-residue chain is Heme A synthase (303 aa).

The Cytoplasmic segment spans residues 1-8; that stretch reads MFGKKNLK. Residues 9–29 form a helical membrane-spanning segment; the sequence is WLGVVATLMMTFVQLGGALVT. At 30-67 the chain is on the extracellular side; the sequence is KTGSADGCGSSWPLCHGALIPEFFPIDTIIELSHRAVS. Cysteine 37 and cysteine 44 are oxidised to a cystine. Glutamate 60 is a catalytic residue. Heme o is bound at residue histidine 63. Residues 68-88 form a helical membrane-spanning segment; it reads ALSLLMVLWLVITAWKHIGYI. Topologically, residues 89–93 are cytoplasmic; sequence KEIKP. The chain crosses the membrane as a helical span at residues 94–114; the sequence is LSIISVGFLLLQALIGAAAVI. Over 115–125 the chain is Extracellular; sequence WQQNDYVLALH. Histidine 125 is a heme o binding site. The chain crosses the membrane as a helical span at residues 126-146; sequence FGISLISFSSVFLITLIIFSI. Over 147 to 163 the chain is Cytoplasmic; it reads DQKYEADELYIKKPLRR. Residues 164–184 traverse the membrane as a helical segment; sequence LTWLMAIIIYCGVYTGALVRH. The Extracellular portion of the chain corresponds to 185–215; the sequence is ADASLAYGGWPLPFHDLVPHSEQDWVQLTHR. Position 214 (histidine 214) interacts with heme b. A helical transmembrane segment spans residues 216 to 236; that stretch reads IMAFIVFTIIMITYIHAVKNY. Over 237-244 the chain is Cytoplasmic; sequence PNNRTVHY. The chain crosses the membrane as a helical span at residues 245–265; sequence GYTAAFILVILQVITGALSIM. Over 266-270 the chain is Extracellular; it reads TNVNL. The helical transmembrane segment at 271-291 threads the bilayer; the sequence is LIALFHALFITYLFGMTTYFI. Histidine 276 lines the heme b pocket. The Cytoplasmic portion of the chain corresponds to 292-303; it reads MLMLRSVRSDKQ.

Belongs to the COX15/CtaA family. Type 1 subfamily. Interacts with CtaB. It depends on heme b as a cofactor.

It is found in the cell membrane. The catalysed reaction is Fe(II)-heme o + 2 A + H2O = Fe(II)-heme a + 2 AH2. It functions in the pathway porphyrin-containing compound metabolism; heme A biosynthesis; heme A from heme O: step 1/1. Its function is as follows. Catalyzes the conversion of heme O to heme A by two successive hydroxylations of the methyl group at C8. The first hydroxylation forms heme I, the second hydroxylation results in an unstable dihydroxymethyl group, which spontaneously dehydrates, resulting in the formyl group of heme A. This is Heme A synthase from Staphylococcus aureus (strain MSSA476).